Reading from the N-terminus, the 494-residue chain is Guanosine-5'-triphosphate,3'-diphosphate pyrophosphatase (494 aa).

The protein belongs to the GppA/Ppx family. GppA subfamily.

The enzyme catalyses guanosine 3'-diphosphate 5'-triphosphate + H2O = guanosine 3',5'-bis(diphosphate) + phosphate + H(+). It functions in the pathway purine metabolism; ppGpp biosynthesis; ppGpp from GTP: step 2/2. In terms of biological role, catalyzes the conversion of pppGpp to ppGpp. Guanosine pentaphosphate (pppGpp) is a cytoplasmic signaling molecule which together with ppGpp controls the 'stringent response', an adaptive process that allows bacteria to respond to amino acid starvation, resulting in the coordinated regulation of numerous cellular activities. This Escherichia coli (strain 55989 / EAEC) protein is Guanosine-5'-triphosphate,3'-diphosphate pyrophosphatase.